Reading from the N-terminus, the 138-residue chain is Large ribosomal subunit protein uL13 (138 aa).

The protein belongs to the universal ribosomal protein uL13 family. In terms of assembly, part of the 50S ribosomal subunit.

This protein is one of the early assembly proteins of the 50S ribosomal subunit, although it is not seen to bind rRNA by itself. It is important during the early stages of 50S assembly. This Picrophilus torridus (strain ATCC 700027 / DSM 9790 / JCM 10055 / NBRC 100828 / KAW 2/3) protein is Large ribosomal subunit protein uL13.